A 410-amino-acid polypeptide reads, in one-letter code: Gamma-glutamyl phosphate reductase (410 aa).

Belongs to the gamma-glutamyl phosphate reductase family.

The protein resides in the cytoplasm. It catalyses the reaction L-glutamate 5-semialdehyde + phosphate + NADP(+) = L-glutamyl 5-phosphate + NADPH + H(+). Its pathway is amino-acid biosynthesis; L-proline biosynthesis; L-glutamate 5-semialdehyde from L-glutamate: step 2/2. Catalyzes the NADPH-dependent reduction of L-glutamate 5-phosphate into L-glutamate 5-semialdehyde and phosphate. The product spontaneously undergoes cyclization to form 1-pyrroline-5-carboxylate. The protein is Gamma-glutamyl phosphate reductase of Sulfurovum sp. (strain NBC37-1).